Reading from the N-terminus, the 204-residue chain is Large ribosomal subunit protein uL4 (204 aa).

Residues 52-76 (AEVRGGGKKPWAQKGGGRARAGSRR) form a disordered region.

It belongs to the universal ribosomal protein uL4 family. As to quaternary structure, part of the 50S ribosomal subunit.

In terms of biological role, one of the primary rRNA binding proteins, this protein initially binds near the 5'-end of the 23S rRNA. It is important during the early stages of 50S assembly. It makes multiple contacts with different domains of the 23S rRNA in the assembled 50S subunit and ribosome. Functionally, forms part of the polypeptide exit tunnel. The sequence is that of Large ribosomal subunit protein uL4 from Sulfurimonas denitrificans (strain ATCC 33889 / DSM 1251) (Thiomicrospira denitrificans (strain ATCC 33889 / DSM 1251)).